We begin with the raw amino-acid sequence, 102 residues long: Protein transport protein sec61 subunit beta (102 aa).

Over residues 1 to 15 (MSSTKASGSVKNSAA) the composition is skewed to polar residues. A disordered region spans residues 1-53 (MSSTKASGSVKNSAASAPGGPKSQIRRRAAVEKNTKESNSGPAGARAAGAPGS). Residues 1 to 72 (MSSTKASGSV…DEASGFKVDP (72 aa)) lie on the Cytoplasmic side of the membrane. Low complexity predominate over residues 41 to 52 (GPAGARAAGAPG). A helical transmembrane segment spans residues 73–93 (VVVMVLSVGFIASVFLLHIVA).

This sequence belongs to the SEC61-beta family. Heterotrimeric complex composed of SEC61, SBH1 and SSS1.

The protein resides in the endoplasmic reticulum membrane. Necessary for protein translocation in the endoplasmic reticulum. In Schizosaccharomyces pombe (strain 972 / ATCC 24843) (Fission yeast), this protein is Protein transport protein sec61 subunit beta (sbh1).